A 434-amino-acid chain; its full sequence is Evolutionarily conserved signaling intermediate in Toll pathway, mitochondrial (434 aa).

Residues 1–48 (MSWVQVNLLARGLSRGWGSICRTVLSGTPFAQPSLQARGLHCSAVTHK) constitute a mitochondrion transit peptide. Residue K371 forms a Glycyl lysine isopeptide (Lys-Gly) (interchain with G-Cter in ubiquitin) linkage. The disordered stretch occupies residues 403-434 (TRLEGQSPPHSPPKGPEEDDEAIQAQQRQGQS).

It belongs to the ECSIT family. As to quaternary structure, interacts with MAP3K1, SMAD4 and TRAF6. Interacts with SMAD1 only after BMP4-treatment. Part of the mitochondrial complex I assembly/MCIA complex that comprises at least the core subunits TMEM126B, NDUFAF1, ECSIT and ACAD9 and complement subunits such as COA1 and TMEM186. Interacts with NDUFAF1. Interacts with ACAD9. Interacts with TRIM59. Interacts with TMEM70 and TMEM242. Interacts (when ubiquitinated) with NF-kappa-B subunits RELA and NFKB1. Interacts with RIGI, IFIT1 and MAVS; these interactions promote RLR-mediated type I IFN induction. Interacts with SQSTM1; this interaction inhibits TLR4 signaling via functional regulation of the TRAF6-ECSIT complex. Interacts with cereblon/CRBN; this interaction inhibits the ubiquitination of ECSIT. Post-translationally, ubiquitinated on Lys-371; leading to translocation in the nucleus together with RELA and NFKB1 and expression of NF-kappa-B-dependent genes.

The protein resides in the cytoplasm. Its subcellular location is the nucleus. The protein localises to the mitochondrion. In terms of biological role, adapter protein that plays a role in different signaling pathways including TLRs and IL-1 pathways or innate antiviral induction signaling. Plays a role in the activation of NF-kappa-B by forming a signal complex with TRAF6 and TAK1/MAP3K7 to activate TAK1/MAP3K7 leading to activation of IKKs. Once ubiquitinated, interacts with the dissociated RELA and NFKB1 proteins and translocates to the nucleus where it induces NF-kappa-B-dependent gene expression. Plays a role in innate antiviral immune response by bridging the pattern recognition receptors RIGI and MDA5/IFIT1 to the MAVS complex at the mitochondrion. Promotes proteolytic activation of MAP3K1. Involved in the BMP signaling pathway. Required for normal embryonic development. Functionally, as part of the MCIA complex, involved in the assembly of the mitochondrial complex I. This is Evolutionarily conserved signaling intermediate in Toll pathway, mitochondrial from Rattus norvegicus (Rat).